A 177-amino-acid polypeptide reads, in one-letter code: Large ribosomal subunit protein uL6 (177 aa).

This sequence belongs to the universal ribosomal protein uL6 family. In terms of assembly, part of the 50S ribosomal subunit.

Functionally, this protein binds to the 23S rRNA, and is important in its secondary structure. It is located near the subunit interface in the base of the L7/L12 stalk, and near the tRNA binding site of the peptidyltransferase center. This chain is Large ribosomal subunit protein uL6, found in Cereibacter sphaeroides (strain ATCC 17025 / ATH 2.4.3) (Rhodobacter sphaeroides).